A 118-amino-acid polypeptide reads, in one-letter code: Small ribosomal subunit protein uS19c (118 aa).

The tract at residues Lys-92–Lys-118 is disordered.

The protein belongs to the universal ribosomal protein uS19 family.

It localises to the plastid. Its function is as follows. Protein S19 forms a complex with S13 that binds strongly to the 16S ribosomal RNA. In Euglena longa (Euglenophycean alga), this protein is Small ribosomal subunit protein uS19c (rps19).